The sequence spans 385 residues: 1-deoxy-D-xylulose 5-phosphate reductoisomerase (385 aa).

7 residues coordinate NADPH: Thr-10, Gly-11, Ser-12, Ile-13, Gly-36, Asn-38, and Asn-122. Lys-123 serves as a coordination point for 1-deoxy-D-xylulose 5-phosphate. Residue Glu-124 participates in NADPH binding. Asp-148 serves as a coordination point for Mn(2+). Residues Ser-149, Glu-150, Ser-174, and His-197 each coordinate 1-deoxy-D-xylulose 5-phosphate. Glu-150 lines the Mn(2+) pocket. NADPH is bound at residue Gly-203. Positions 210, 215, 216, and 219 each coordinate 1-deoxy-D-xylulose 5-phosphate. Glu-219 provides a ligand contact to Mn(2+).

It belongs to the DXR family. Requires Mg(2+) as cofactor. Mn(2+) is required as a cofactor.

It carries out the reaction 2-C-methyl-D-erythritol 4-phosphate + NADP(+) = 1-deoxy-D-xylulose 5-phosphate + NADPH + H(+). Its pathway is isoprenoid biosynthesis; isopentenyl diphosphate biosynthesis via DXP pathway; isopentenyl diphosphate from 1-deoxy-D-xylulose 5-phosphate: step 1/6. In terms of biological role, catalyzes the NADPH-dependent rearrangement and reduction of 1-deoxy-D-xylulose-5-phosphate (DXP) to 2-C-methyl-D-erythritol 4-phosphate (MEP). The chain is 1-deoxy-D-xylulose 5-phosphate reductoisomerase from Geobacter sp. (strain M21).